A 221-amino-acid chain; its full sequence is Thiamine-phosphate synthase (221 aa).

4-amino-2-methyl-5-(diphosphooxymethyl)pyrimidine contacts are provided by residues 46–50 (QFREK) and N83. Residues D84 and D103 each coordinate Mg(2+). S122 serves as a coordination point for 4-amino-2-methyl-5-(diphosphooxymethyl)pyrimidine. 2-[(2R,5Z)-2-carboxy-4-methylthiazol-5(2H)-ylidene]ethyl phosphate is bound at residue 149 to 151 (TQS). Residue K152 participates in 4-amino-2-methyl-5-(diphosphooxymethyl)pyrimidine binding. Residues G181 and 201-202 (IS) contribute to the 2-[(2R,5Z)-2-carboxy-4-methylthiazol-5(2H)-ylidene]ethyl phosphate site.

This sequence belongs to the thiamine-phosphate synthase family. The cofactor is Mg(2+).

The catalysed reaction is 2-[(2R,5Z)-2-carboxy-4-methylthiazol-5(2H)-ylidene]ethyl phosphate + 4-amino-2-methyl-5-(diphosphooxymethyl)pyrimidine + 2 H(+) = thiamine phosphate + CO2 + diphosphate. It carries out the reaction 2-(2-carboxy-4-methylthiazol-5-yl)ethyl phosphate + 4-amino-2-methyl-5-(diphosphooxymethyl)pyrimidine + 2 H(+) = thiamine phosphate + CO2 + diphosphate. The enzyme catalyses 4-methyl-5-(2-phosphooxyethyl)-thiazole + 4-amino-2-methyl-5-(diphosphooxymethyl)pyrimidine + H(+) = thiamine phosphate + diphosphate. Its pathway is cofactor biosynthesis; thiamine diphosphate biosynthesis; thiamine phosphate from 4-amino-2-methyl-5-diphosphomethylpyrimidine and 4-methyl-5-(2-phosphoethyl)-thiazole: step 1/1. Condenses 4-methyl-5-(beta-hydroxyethyl)thiazole monophosphate (THZ-P) and 2-methyl-4-amino-5-hydroxymethyl pyrimidine pyrophosphate (HMP-PP) to form thiamine monophosphate (TMP). The protein is Thiamine-phosphate synthase of Actinobacillus succinogenes (strain ATCC 55618 / DSM 22257 / CCUG 43843 / 130Z).